A 104-amino-acid polypeptide reads, in one-letter code: Large ribosomal subunit protein bL21 (104 aa).

It belongs to the bacterial ribosomal protein bL21 family. Part of the 50S ribosomal subunit. Contacts protein L20.

Its function is as follows. This protein binds to 23S rRNA in the presence of protein L20. The sequence is that of Large ribosomal subunit protein bL21 from Pseudomonas putida (strain W619).